We begin with the raw amino-acid sequence, 747 residues long: Polyribonucleotide nucleotidyltransferase (747 aa).

Mg(2+) is bound by residues Asp487 and Asp493. The KH domain maps to 554–613; that stretch reads PSTTTIKIDKDKIRDIIGPGGKIIKEICETSGAKIDISDDGTVSVYAADRDKLKIASDKI. The S1 motif domain occupies 623–691; it reads GEIFNGTVTK…NKGKAKLTIK (69 aa). The segment at 694-716 is disordered; sequence DKDKSLNNPKPQNSINNAKENSE. Over residues 699-712 the composition is skewed to polar residues; the sequence is LNNPKPQNSINNAK.

The protein belongs to the polyribonucleotide nucleotidyltransferase family. The cofactor is Mg(2+).

The protein resides in the cytoplasm. The enzyme catalyses RNA(n+1) + phosphate = RNA(n) + a ribonucleoside 5'-diphosphate. Functionally, involved in mRNA degradation. Catalyzes the phosphorolysis of single-stranded polyribonucleotides processively in the 3'- to 5'-direction. The polypeptide is Polyribonucleotide nucleotidyltransferase (Rickettsia canadensis (strain McKiel)).